Here is a 410-residue protein sequence, read N- to C-terminus: Multifunctional CCA protein (410 aa).

Residues glycine 8 and arginine 11 each coordinate ATP. CTP contacts are provided by glycine 8 and arginine 11. Mg(2+) contacts are provided by aspartate 21 and aspartate 23. Residues arginine 91, arginine 137, and arginine 140 each contribute to the ATP site. CTP is bound by residues arginine 91, arginine 137, and arginine 140. An HD domain is found at 228–329 (TGVHVLSVLQ…LELLQSFDVY (102 aa)).

This sequence belongs to the tRNA nucleotidyltransferase/poly(A) polymerase family. Bacterial CCA-adding enzyme type 1 subfamily. As to quaternary structure, monomer. Can also form homodimers and oligomers. Mg(2+) is required as a cofactor. Ni(2+) serves as cofactor.

It catalyses the reaction a tRNA precursor + 2 CTP + ATP = a tRNA with a 3' CCA end + 3 diphosphate. The catalysed reaction is a tRNA with a 3' CCA end + 2 CTP + ATP = a tRNA with a 3' CCACCA end + 3 diphosphate. In terms of biological role, catalyzes the addition and repair of the essential 3'-terminal CCA sequence in tRNAs without using a nucleic acid template. Adds these three nucleotides in the order of C, C, and A to the tRNA nucleotide-73, using CTP and ATP as substrates and producing inorganic pyrophosphate. tRNA 3'-terminal CCA addition is required both for tRNA processing and repair. Also involved in tRNA surveillance by mediating tandem CCA addition to generate a CCACCA at the 3' terminus of unstable tRNAs. While stable tRNAs receive only 3'-terminal CCA, unstable tRNAs are marked with CCACCA and rapidly degraded. In Pseudomonas aeruginosa (strain LESB58), this protein is Multifunctional CCA protein.